Reading from the N-terminus, the 87-residue chain is Small ribosomal subunit protein bS20 (87 aa).

A disordered region spans residues 1 to 23 (MANHKSAIKRHKQSVKRAARNRA).

It belongs to the bacterial ribosomal protein bS20 family.

Binds directly to 16S ribosomal RNA. In Oleidesulfovibrio alaskensis (strain ATCC BAA-1058 / DSM 17464 / G20) (Desulfovibrio alaskensis), this protein is Small ribosomal subunit protein bS20.